The following is a 290-amino-acid chain: Ribosomal RNA small subunit methyltransferase A (290 aa).

6 residues coordinate S-adenosyl-L-methionine: Asn-27, Leu-29, Gly-54, Glu-75, Asp-100, and Asn-125.

It belongs to the class I-like SAM-binding methyltransferase superfamily. rRNA adenine N(6)-methyltransferase family. RsmA subfamily.

Its subcellular location is the cytoplasm. It carries out the reaction adenosine(1518)/adenosine(1519) in 16S rRNA + 4 S-adenosyl-L-methionine = N(6)-dimethyladenosine(1518)/N(6)-dimethyladenosine(1519) in 16S rRNA + 4 S-adenosyl-L-homocysteine + 4 H(+). In terms of biological role, specifically dimethylates two adjacent adenosines (A1518 and A1519) in the loop of a conserved hairpin near the 3'-end of 16S rRNA in the 30S particle. May play a critical role in biogenesis of 30S subunits. This is Ribosomal RNA small subunit methyltransferase A from Streptococcus uberis (strain ATCC BAA-854 / 0140J).